The sequence spans 132 residues: Small ribosomal subunit protein uS8c (132 aa).

This sequence belongs to the universal ribosomal protein uS8 family. Part of the 30S ribosomal subunit.

It localises to the plastid. The protein localises to the chloroplast. Its function is as follows. One of the primary rRNA binding proteins, it binds directly to 16S rRNA central domain where it helps coordinate assembly of the platform of the 30S subunit. The protein is Small ribosomal subunit protein uS8c (rps8) of Drimys granadensis.